The primary structure comprises 115 residues: NADH-ubiquinone oxidoreductase chain 3 (115 aa).

Transmembrane regions (helical) follow at residues 4 to 24 (LLTM…AFWL), 55 to 75 (FFLV…LLPI), and 84 to 104 (INTM…GLAY).

It belongs to the complex I subunit 3 family. In terms of assembly, core subunit of respiratory chain NADH dehydrogenase (Complex I) which is composed of 45 different subunits. Interacts with TMEM186. Interacts with TMEM242.

The protein resides in the mitochondrion inner membrane. The catalysed reaction is a ubiquinone + NADH + 5 H(+)(in) = a ubiquinol + NAD(+) + 4 H(+)(out). Its function is as follows. Core subunit of the mitochondrial membrane respiratory chain NADH dehydrogenase (Complex I) which catalyzes electron transfer from NADH through the respiratory chain, using ubiquinone as an electron acceptor. Essential for the catalytic activity of complex I. The chain is NADH-ubiquinone oxidoreductase chain 3 from Neotoma lepida (Desert woodrat).